The primary structure comprises 261 residues: DNA repair protein RecO (261 aa).

This sequence belongs to the RecO family.

In terms of biological role, involved in DNA repair and RecF pathway recombination. The sequence is that of DNA repair protein RecO from Chlorobium limicola (strain DSM 245 / NBRC 103803 / 6330).